Reading from the N-terminus, the 382-residue chain is Queuine tRNA-ribosyltransferase (382 aa).

Catalysis depends on D93, which acts as the Proton acceptor. Residues 93-97 (DSGGF), D147, Q191, and G218 contribute to the substrate site. Residues 249-255 (GVGKPED) are RNA binding. The Nucleophile role is filled by D268. The segment at 273 to 277 (TRNAR) is RNA binding; important for wobble base 34 recognition. The Zn(2+) site is built by C306, C308, C311, and H337.

This sequence belongs to the queuine tRNA-ribosyltransferase family. In terms of assembly, homodimer. Within each dimer, one monomer is responsible for RNA recognition and catalysis, while the other monomer binds to the replacement base PreQ1. Zn(2+) serves as cofactor.

It catalyses the reaction 7-aminomethyl-7-carbaguanine + guanosine(34) in tRNA = 7-aminomethyl-7-carbaguanosine(34) in tRNA + guanine. It participates in tRNA modification; tRNA-queuosine biosynthesis. Catalyzes the base-exchange of a guanine (G) residue with the queuine precursor 7-aminomethyl-7-deazaguanine (PreQ1) at position 34 (anticodon wobble position) in tRNAs with GU(N) anticodons (tRNA-Asp, -Asn, -His and -Tyr). Catalysis occurs through a double-displacement mechanism. The nucleophile active site attacks the C1' of nucleotide 34 to detach the guanine base from the RNA, forming a covalent enzyme-RNA intermediate. The proton acceptor active site deprotonates the incoming PreQ1, allowing a nucleophilic attack on the C1' of the ribose to form the product. After dissociation, two additional enzymatic reactions on the tRNA convert PreQ1 to queuine (Q), resulting in the hypermodified nucleoside queuosine (7-(((4,5-cis-dihydroxy-2-cyclopenten-1-yl)amino)methyl)-7-deazaguanosine). This is Queuine tRNA-ribosyltransferase from Actinobacillus pleuropneumoniae serotype 5b (strain L20).